We begin with the raw amino-acid sequence, 90 residues long: RNA-binding protein Hfq (90 aa).

The Sm domain occupies 9 to 69; sequence DRFLNHLRVN…ISTIIPSSYV (61 aa).

This sequence belongs to the Hfq family. As to quaternary structure, homohexamer.

Functionally, RNA chaperone that binds small regulatory RNA (sRNAs) and mRNAs to facilitate mRNA translational regulation in response to envelope stress, environmental stress and changes in metabolite concentrations. Also binds with high specificity to tRNAs. In Thermotoga sp. (strain RQ2), this protein is RNA-binding protein Hfq.